The primary structure comprises 196 residues: ATP-dependent Clp protease proteolytic subunit (196 aa).

The Nucleophile role is filled by Ser-101. His-126 is a catalytic residue.

This sequence belongs to the peptidase S14 family. In terms of assembly, component of the chloroplastic Clp protease core complex.

The protein localises to the plastid. It localises to the chloroplast stroma. The enzyme catalyses Hydrolysis of proteins to small peptides in the presence of ATP and magnesium. alpha-casein is the usual test substrate. In the absence of ATP, only oligopeptides shorter than five residues are hydrolyzed (such as succinyl-Leu-Tyr-|-NHMec, and Leu-Tyr-Leu-|-Tyr-Trp, in which cleavage of the -Tyr-|-Leu- and -Tyr-|-Trp bonds also occurs).. Functionally, cleaves peptides in various proteins in a process that requires ATP hydrolysis. Has a chymotrypsin-like activity. Plays a major role in the degradation of misfolded proteins. The protein is ATP-dependent Clp protease proteolytic subunit of Gossypium barbadense (Sea Island cotton).